The following is a 72-amino-acid chain: Translation initiation factor IF-1 (72 aa).

Residues methionine 1–lysine 72 enclose the S1-like domain.

It belongs to the IF-1 family. As to quaternary structure, component of the 30S ribosomal translation pre-initiation complex which assembles on the 30S ribosome in the order IF-2 and IF-3, IF-1 and N-formylmethionyl-tRNA(fMet); mRNA recruitment can occur at any time during PIC assembly.

It is found in the cytoplasm. One of the essential components for the initiation of protein synthesis. Stabilizes the binding of IF-2 and IF-3 on the 30S subunit to which N-formylmethionyl-tRNA(fMet) subsequently binds. Helps modulate mRNA selection, yielding the 30S pre-initiation complex (PIC). Upon addition of the 50S ribosomal subunit IF-1, IF-2 and IF-3 are released leaving the mature 70S translation initiation complex. The chain is Translation initiation factor IF-1 from Vesicomyosocius okutanii subsp. Calyptogena okutanii (strain HA).